A 414-amino-acid chain; its full sequence is Pre-mRNA-processing protein 45 (414 aa).

Disordered stretches follow at residues 128–159 (ESKRQDPLQPSRQKNTSSKIVLPEDDETDTPI) and 264–292 (RSKIQTQSSAVKKRGSRFEGGRHQNKKIK). Residues 135-146 (LQPSRQKNTSSK) are compositionally biased toward polar residues.

This sequence belongs to the SNW family. As to quaternary structure, associated with the spliceosome.

It localises to the nucleus. Its function is as follows. Involved in pre-mRNA splicing. The sequence is that of Pre-mRNA-processing protein 45 (PRP45) from Candida glabrata (strain ATCC 2001 / BCRC 20586 / JCM 3761 / NBRC 0622 / NRRL Y-65 / CBS 138) (Yeast).